A 591-amino-acid chain; its full sequence is NADP-dependent malic enzyme (591 aa).

Basic and acidic residues predominate over residues 1–10; sequence MESTLKEMRD. The tract at residues 1–26 is disordered; it reads MESTLKEMRDGASVLDMDPKSTVGGG. Tyr139 (proton donor) is an active-site residue. Arg192 contributes to the NAD(+) binding site. Lys210 serves as the catalytic Proton acceptor. A divalent metal cation is bound by residues Glu282, Asp283, and Asp306. Asp306 contacts NAD(+). 335–351 is a binding site for NADP(+); the sequence is LFLGAGEAGTGIAELIA. An NAD(+)-binding site is contributed by Asn447.

Belongs to the malic enzymes family. As to quaternary structure, homotetramer. Requires Mg(2+) as cofactor. It depends on Mn(2+) as a cofactor. In terms of tissue distribution, mRNA found twofold higher in leaves and stems than in roots.

It is found in the cytoplasm. It carries out the reaction (S)-malate + NADP(+) = pyruvate + CO2 + NADPH. The enzyme catalyses oxaloacetate + H(+) = pyruvate + CO2. This Populus trichocarpa (Western balsam poplar) protein is NADP-dependent malic enzyme.